We begin with the raw amino-acid sequence, 494 residues long: Probable cytosol aminopeptidase (494 aa).

Residues Lys-260 and Asp-265 each coordinate Mn(2+). Residue Lys-272 is part of the active site. Asp-283, Asp-342, and Glu-344 together coordinate Mn(2+). Residue Arg-346 is part of the active site.

This sequence belongs to the peptidase M17 family. It depends on Mn(2+) as a cofactor.

Its subcellular location is the cytoplasm. The catalysed reaction is Release of an N-terminal amino acid, Xaa-|-Yaa-, in which Xaa is preferably Leu, but may be other amino acids including Pro although not Arg or Lys, and Yaa may be Pro. Amino acid amides and methyl esters are also readily hydrolyzed, but rates on arylamides are exceedingly low.. It carries out the reaction Release of an N-terminal amino acid, preferentially leucine, but not glutamic or aspartic acids.. Presumably involved in the processing and regular turnover of intracellular proteins. Catalyzes the removal of unsubstituted N-terminal amino acids from various peptides. This chain is Probable cytosol aminopeptidase, found in Bacillus cereus (strain Q1).